The chain runs to 685 residues: Probable cysteine desulfurase (685 aa).

The tract at residues 1–282 is cargo-loading domain; that stretch reads MTRSPCSTTS…RDEHEVFDVA (282 aa). Disordered regions lie at residues 48–135 and 162–185; these read SIRP…TSAG and PTPA…VPDT. Residues 71–85 are compositionally biased toward low complexity; that stretch reads ATAATSAGRTAAGTA. Over residues 102 to 121 the composition is skewed to pro residues; it reads LPPPASPAPEAPPQAAPPAP. The span at 122–135 shows a compositional bias: low complexity; the sequence is RGSAPDATAATSAG. A compositionally biased stretch (pro residues) spans 164-178; it reads PAGPEAPPQSAPPAP. Lys502 carries the N6-(pyridoxal phosphate)lysine modification. The Cysteine persulfide intermediate role is filled by Cys640.

It belongs to the class-V pyridoxal-phosphate-dependent aminotransferase family. Csd subfamily. As to quaternary structure, isolated from bacteria in a complex with encapsulin 2A (AC I3NID5), strongly suggesting it is found in a type 2A encapsulin nanocompartment. There are 1-2 copies of this protein in each encapsulin shell. Requires pyridoxal 5'-phosphate as cofactor.

The protein resides in the encapsulin nanocompartment. Its subcellular location is the cell membrane. The catalysed reaction is (sulfur carrier)-H + L-cysteine = (sulfur carrier)-SH + L-alanine. Its function is as follows. Cargo protein of a type 2A encapsulin nanocompartment involved in sulfur metabolism. Cysteine desulfurases mobilize the sulfur from L-cysteine to yield L-alanine, an essential step in sulfur metabolism for biosynthesis of a variety of sulfur-containing biomolecules. The protein is Probable cysteine desulfurase of Mycolicibacterium paratuberculosis (strain ATCC BAA-968 / K-10) (Mycobacterium paratuberculosis).